Consider the following 294-residue polypeptide: 33 kDa chaperonin (294 aa).

2 cysteine pairs are disulfide-bonded: cysteine 239-cysteine 241 and cysteine 272-cysteine 275.

Belongs to the HSP33 family. Post-translationally, under oxidizing conditions two disulfide bonds are formed involving the reactive cysteines. Under reducing conditions zinc is bound to the reactive cysteines and the protein is inactive.

The protein resides in the cytoplasm. In terms of biological role, redox regulated molecular chaperone. Protects both thermally unfolding and oxidatively damaged proteins from irreversible aggregation. Plays an important role in the bacterial defense system toward oxidative stress. The chain is 33 kDa chaperonin from Lacticaseibacillus paracasei (strain ATCC 334 / BCRC 17002 / CCUG 31169 / CIP 107868 / KCTC 3260 / NRRL B-441) (Lactobacillus paracasei).